The sequence spans 125 residues: Small ribosomal subunit protein uS13 (125 aa).

The tract at residues 92 to 125 (RRSLPVRGQRTQTNARTRKGKRKTVAGKKKATKK) is disordered. Basic residues predominate over residues 107–125 (RTRKGKRKTVAGKKKATKK).

It belongs to the universal ribosomal protein uS13 family. As to quaternary structure, part of the 30S ribosomal subunit. Forms a loose heterodimer with protein S19. Forms two bridges to the 50S subunit in the 70S ribosome.

In terms of biological role, located at the top of the head of the 30S subunit, it contacts several helices of the 16S rRNA. In the 70S ribosome it contacts the 23S rRNA (bridge B1a) and protein L5 of the 50S subunit (bridge B1b), connecting the 2 subunits; these bridges are implicated in subunit movement. Contacts the tRNAs in the A and P-sites. The sequence is that of Small ribosomal subunit protein uS13 from Chlorobium limicola (strain DSM 245 / NBRC 103803 / 6330).